A 215-amino-acid polypeptide reads, in one-letter code: Probable septum site-determining protein MinC (215 aa).

The protein belongs to the MinC family. In terms of assembly, interacts with MinD and FtsZ.

In terms of biological role, cell division inhibitor that blocks the formation of polar Z ring septums. Rapidly oscillates between the poles of the cell to destabilize FtsZ filaments that have formed before they mature into polar Z rings. Prevents FtsZ polymerization. This Clostridium botulinum (strain Alaska E43 / Type E3) protein is Probable septum site-determining protein MinC.